The primary structure comprises 410 residues: Gamma-glutamyl phosphate reductase (410 aa).

The protein belongs to the gamma-glutamyl phosphate reductase family.

The protein resides in the cytoplasm. The enzyme catalyses L-glutamate 5-semialdehyde + phosphate + NADP(+) = L-glutamyl 5-phosphate + NADPH + H(+). Its pathway is amino-acid biosynthesis; L-proline biosynthesis; L-glutamate 5-semialdehyde from L-glutamate: step 2/2. In terms of biological role, catalyzes the NADPH-dependent reduction of L-glutamate 5-phosphate into L-glutamate 5-semialdehyde and phosphate. The product spontaneously undergoes cyclization to form 1-pyrroline-5-carboxylate. In Campylobacter jejuni subsp. jejuni serotype O:2 (strain ATCC 700819 / NCTC 11168), this protein is Gamma-glutamyl phosphate reductase.